Consider the following 207-residue polypeptide: Large ribosomal subunit protein uL4 (207 aa).

Positions 45–57 (RQGTHSVKNRSTV) are enriched in polar residues. Residues 45–77 (RQGTHSVKNRSTVSGGGRKPWRQKGTGNARQGS) form a disordered region.

This sequence belongs to the universal ribosomal protein uL4 family. As to quaternary structure, part of the 50S ribosomal subunit.

Functionally, one of the primary rRNA binding proteins, this protein initially binds near the 5'-end of the 23S rRNA. It is important during the early stages of 50S assembly. It makes multiple contacts with different domains of the 23S rRNA in the assembled 50S subunit and ribosome. Forms part of the polypeptide exit tunnel. The protein is Large ribosomal subunit protein uL4 of Oenococcus oeni (strain ATCC BAA-331 / PSU-1).